The following is a 217-amino-acid chain: 3-demethoxyubiquinol 3-hydroxylase (217 aa).

Fe cation is bound by residues Glu66, Glu96, His99, Glu148, Glu180, and His183.

This sequence belongs to the COQ7 family. It depends on Fe cation as a cofactor.

The protein localises to the cell membrane. The catalysed reaction is a 5-methoxy-2-methyl-3-(all-trans-polyprenyl)benzene-1,4-diol + AH2 + O2 = a 3-demethylubiquinol + A + H2O. It functions in the pathway cofactor biosynthesis; ubiquinone biosynthesis. Its function is as follows. Catalyzes the hydroxylation of 2-nonaprenyl-3-methyl-6-methoxy-1,4-benzoquinol during ubiquinone biosynthesis. This chain is 3-demethoxyubiquinol 3-hydroxylase, found in Xanthomonas campestris pv. campestris (strain 8004).